The primary structure comprises 606 residues: Glutamine--fructose-6-phosphate aminotransferase [isomerizing] (606 aa).

Cysteine 2 acts as the Nucleophile; for GATase activity in catalysis. Positions 2-217 constitute a Glutamine amidotransferase type-2 domain; that stretch reads CGIIGIVGKE…EGDYVALDHD (216 aa). 2 consecutive SIS domains span residues 280-421 and 454-596; these read VPGD…ARGT and IAAD…VDQP. Lysine 601 (for Fru-6P isomerization activity) is an active-site residue.

Homodimer.

It is found in the cytoplasm. It carries out the reaction D-fructose 6-phosphate + L-glutamine = D-glucosamine 6-phosphate + L-glutamate. Functionally, catalyzes the first step in hexosamine metabolism, converting fructose-6P into glucosamine-6P using glutamine as a nitrogen source. The protein is Glutamine--fructose-6-phosphate aminotransferase [isomerizing] of Caulobacter vibrioides (strain ATCC 19089 / CIP 103742 / CB 15) (Caulobacter crescentus).